A 222-amino-acid chain; its full sequence is Inositol diphosphatase DSP1 (222 aa).

The segment covering Met-1–Asp-14 has biased composition (polar residues). The interval Met-1–Pro-41 is disordered. The region spanning Asn-68–Cys-222 is the Tyrosine-protein phosphatase domain. The WPD loop important for active site topology stretch occupies residues Phe-124–Ile-136. The 1D-myo-inositol hexakisphosphate site is built by Asn-135, Ile-136, and Arg-140. The active-site Phosphocysteine intermediate is the Cys-160.

Belongs to the protein-tyrosine phosphatase family. Atypical dual-specificity phosphatase Siw14-like subfamily.

It localises to the nucleus. It is found in the cytoplasm. It catalyses the reaction 5-diphospho-1D-myo-inositol 1,2,3,4,6-pentakisphosphate + H2O = 1D-myo-inositol hexakisphosphate + phosphate + H(+). The enzyme catalyses 1,5-bis(diphospho)-1D-myo-inositol 2,3,4,6-tetrakisphosphate + H2O = 1-diphospho-1D-myo-inositol 2,3,4,5,6-pentakisphosphate + phosphate + 2 H(+). It carries out the reaction 3,5-bis(diphospho)-1D-myo-inositol 1,2,4,6-tetrakisphosphate + H2O = 3-diphospho-1D-myo-inositol 1,2,4,5,6-pentakisphosphate + phosphate + 2 H(+). The catalysed reaction is 6-diphospho-1D-myo-inositol pentakisphosphate + H2O = 1D-myo-inositol hexakisphosphate + phosphate + H(+). In terms of biological role, cleaves the beta-phosphate at the 5-position of soluble inositol pyrophosphates. Has highest activity on 5-diphosphoinositol 1,2,3,4,6-pentakisphosphate (5-InsP(7)). Possesses phosphotyrosine phosphatase activity in vitro. May contribute to regulation of drought stress responses. This is Inositol diphosphatase DSP1 from Oryza sativa subsp. japonica (Rice).